A 147-amino-acid polypeptide reads, in one-letter code: Protein-export protein SecB 2 (147 aa).

Belongs to the SecB family. In terms of assembly, homotetramer, a dimer of dimers. One homotetramer interacts with 1 SecA dimer.

It localises to the cytoplasm. Functionally, one of the proteins required for the normal export of preproteins out of the cell cytoplasm. It is a molecular chaperone that binds to a subset of precursor proteins, maintaining them in a translocation-competent state. It also specifically binds to its receptor SecA. In Francisella tularensis subsp. holarctica (strain FTNF002-00 / FTA), this protein is Protein-export protein SecB 2.